A 602-amino-acid polypeptide reads, in one-letter code: Major facilitator superfamily multidrug transporter mfsB (602 aa).

The next 12 membrane-spanning stretches (helical) occupy residues 29 to 49 (FVLA…FPYV), 67 to 87 (LYAG…GMFW), 98 to 118 (PVLI…GFAP), 128 to 148 (ALGG…AEIV), 160 to 180 (IMPF…GALA), 201 to 221 (FLLP…VGFL), 329 to 349 (IVAY…IPVF), 378 to 398 (FMLA…FPFV), 411 to 431 (VLLV…LPSI), 439 to 459 (LALI…AILL), 468 to 486 (VLGS…SRAL), and 505 to 525 (IIAW…SFWM). The tract at residues 527–602 (ESEPRRDSEK…RSNPLAFAED (76 aa)) is disordered. Residues 528–538 (SEPRRDSEKAG) show a composition bias toward basic and acidic residues.

The protein belongs to the major facilitator superfamily.

The protein localises to the membrane. In terms of biological role, major facilitator superfamily transporter that may be involved in A.fumigatus adaptation to azoles such as vorizonazole. The sequence is that of Major facilitator superfamily multidrug transporter mfsB from Aspergillus fumigatus (strain ATCC MYA-4609 / CBS 101355 / FGSC A1100 / Af293) (Neosartorya fumigata).